Here is a 326-residue protein sequence, read N- to C-terminus: tRNA-modifying protein YgfZ (326 aa).

Folate contacts are provided by Trp-27 and Trp-189.

It belongs to the tRNA-modifying YgfZ family.

It localises to the cytoplasm. Functionally, folate-binding protein involved in regulating the level of ATP-DnaA and in the modification of some tRNAs. It is probably a key factor in regulatory networks that act via tRNA modification, such as initiation of chromosomal replication. The sequence is that of tRNA-modifying protein YgfZ from Escherichia coli (strain SE11).